A 1394-amino-acid chain; its full sequence is DNA-directed RNA polymerase subunit beta (1394 aa).

Belongs to the RNA polymerase beta chain family. As to quaternary structure, the RNAP catalytic core consists of 2 alpha, 1 beta, 1 beta' and 1 omega subunit. When a sigma factor is associated with the core the holoenzyme is formed, which can initiate transcription.

It catalyses the reaction RNA(n) + a ribonucleoside 5'-triphosphate = RNA(n+1) + diphosphate. Functionally, DNA-dependent RNA polymerase catalyzes the transcription of DNA into RNA using the four ribonucleoside triphosphates as substrates. This Anaplasma phagocytophilum (Ehrlichia phagocytophila) protein is DNA-directed RNA polymerase subunit beta.